The sequence spans 657 residues: LIM and SH3 domain protein Lasp (657 aa).

Residues 3 to 63 form the LIM zinc-binding domain; it reads KTCARCQKVV…EAHIPKAKAT (61 aa). Nebulin repeat units follow at residues 64–95 and 96–130; these read AIAD…KAKG and KFTQ…KKAA. Disordered stretches follow at residues 130 to 151, 164 to 223, 235 to 257, 294 to 318, 332 to 415, and 460 to 528; these read AMEK…EYFS, PTAS…PIQH, YQQL…QLHD, LYPT…QQQA, NSHH…SAAS, and KQHA…PKRI. Over residues 140-150 the composition is skewed to polar residues; that stretch reads VSDSSNESEYF. Composition is skewed to low complexity over residues 172–215 and 236–254; these read AATT…QQQT and QQLQ…QQQQ. The span at 332 to 341 shows a compositional bias: polar residues; sequence NSHHPSGNSV. The segment covering 342 to 357 has biased composition (low complexity); that stretch reads DQYDQPQQQQHQPQQQ. Residues 358-370 are compositionally biased toward polar residues; sequence STNPTLVAAQQQQ. A compositionally biased stretch (low complexity) spans 371-403; sequence SHHSLLNNNASNGGISHSHHSNINNNGHGSQNQ. Over residues 460–475 the composition is skewed to polar residues; that stretch reads KQHASNGHMPNQQQQH. Residues Ser505 and Ser530 each carry the phosphoserine modification. The interval 548-592 is disordered; it reads EQAHQQQKHQQYYQQVQMMQQQEHPPQQQQMRQQPSYSSLQEKQS. Low complexity predominate over residues 549-586; that stretch reads QAHQQQKHQQYYQQVQMMQQQEHPPQQQQMRQQPSYSS. In terms of domain architecture, SH3 spans 596-657; that stretch reads TAMRVYRAIY…PANYVEQAVI (62 aa).

Interacts with osk.

In Drosophila melanogaster (Fruit fly), this protein is LIM and SH3 domain protein Lasp.